The sequence spans 369 residues: Maltose/maltodextrin import ATP-binding protein MalK (369 aa).

The ABC transporter domain maps to 4–234; it reads VQLRNVTKAW…PADRFVAGFI (231 aa). 36-43 contacts ATP; the sequence is GPSGCGKS.

This sequence belongs to the ABC transporter superfamily. Maltooligosaccharide importer (TC 3.A.1.1.1) family. In terms of assembly, the complex is composed of two ATP-binding proteins (MalK), two transmembrane proteins (MalG and MalK) and a solute-binding protein (MalE).

It localises to the cell inner membrane. The catalysed reaction is D-maltose(out) + ATP + H2O = D-maltose(in) + ADP + phosphate + H(+). In terms of biological role, part of the ABC transporter complex MalEFGK involved in maltose/maltodextrin import. Responsible for energy coupling to the transport system. The protein is Maltose/maltodextrin import ATP-binding protein MalK of Salmonella typhi.